The sequence spans 90 residues: Translation initiation factor IF-1 2 (90 aa).

Residues 1 to 72 form the S1-like domain; sequence MAKEELLELD…TKGRINFRHK (72 aa).

This sequence belongs to the IF-1 family. In terms of assembly, component of the 30S ribosomal translation pre-initiation complex which assembles on the 30S ribosome in the order IF-2 and IF-3, IF-1 and N-formylmethionyl-tRNA(fMet); mRNA recruitment can occur at any time during PIC assembly.

The protein localises to the cytoplasm. In terms of biological role, one of the essential components for the initiation of protein synthesis. Stabilizes the binding of IF-2 and IF-3 on the 30S subunit to which N-formylmethionyl-tRNA(fMet) subsequently binds. Helps modulate mRNA selection, yielding the 30S pre-initiation complex (PIC). Upon addition of the 50S ribosomal subunit IF-1, IF-2 and IF-3 are released leaving the mature 70S translation initiation complex. This Paraburkholderia xenovorans (strain LB400) protein is Translation initiation factor IF-1 2.